A 355-amino-acid chain; its full sequence is Beta-ketoacyl-[acyl-carrier-protein] synthase III (355 aa).

Catalysis depends on residues C122 and H280. Residues 281–285 (QANMR) are ACP-binding. N311 is an active-site residue.

This sequence belongs to the thiolase-like superfamily. FabH family. In terms of assembly, homodimer.

The protein resides in the cytoplasm. It carries out the reaction malonyl-[ACP] + acetyl-CoA + H(+) = 3-oxobutanoyl-[ACP] + CO2 + CoA. The protein operates within lipid metabolism; fatty acid biosynthesis. Its function is as follows. Catalyzes the condensation reaction of fatty acid synthesis by the addition to an acyl acceptor of two carbons from malonyl-ACP. Catalyzes the first condensation reaction which initiates fatty acid synthesis and may therefore play a role in governing the total rate of fatty acid production. Possesses both acetoacetyl-ACP synthase and acetyl transacylase activities. Its substrate specificity determines the biosynthesis of branched-chain and/or straight-chain of fatty acids. In Kocuria rhizophila (strain ATCC 9341 / DSM 348 / NBRC 103217 / DC2201), this protein is Beta-ketoacyl-[acyl-carrier-protein] synthase III.